We begin with the raw amino-acid sequence, 403 residues long: Double C2-like domain-containing protein alpha (403 aa).

Residues 1–92 form an interaction with UNC13D and DYNLT1 region; the sequence is MRGRRGDRMT…DSYDSDDTTA (92 aa). 2 C2 domains span residues 92 to 214 and 254 to 387; these read ALGT…HFNI and ERGR…ERWH. 9 residues coordinate Ca(2+): aspartate 123, aspartate 129, aspartate 184, aspartate 186, aspartate 285, aspartate 291, aspartate 345, aspartate 347, and aspartate 353. Residues 218-403 form an interaction with UNC13D region; sequence RQVPLPSPSS…PPAAGALPLA (186 aa).

Interacts (via N-terminus) with UNC13A. Interacts with cytoplasmic dynein light chain DYNLT1. Interacts with UNC13D. Ca(2+) is required as a cofactor. In terms of tissue distribution, predominantly expressed in brain. Also found in non-neural tissues. Expressed in RBL-2H3 mast cell line.

It localises to the cytoplasmic vesicle. Its subcellular location is the secretory vesicle. The protein resides in the synaptic vesicle membrane. The protein localises to the synapse. It is found in the synaptosome. It localises to the lysosome. Its function is as follows. Calcium sensor which most probably regulates fusion of vesicles with membranes. Binds calcium and phospholipids. May be involved in calcium dependent neurotransmitter release through the interaction with UNC13A. May be involved in calcium-dependent spontaneous release of neurotransmitter in absence of action potentials in neuronal cells. Regulates Ca(2+)-dependent secretory lysosome exocytosis in mast cells. This chain is Double C2-like domain-containing protein alpha (Doc2a), found in Rattus norvegicus (Rat).